We begin with the raw amino-acid sequence, 2144 residues long: Alpha-protein kinase 2 (2144 aa).

The 99-residue stretch at 7-105 (PERRTLCFLS…ICCSASLEVQ (99 aa)) folds into the Ig-like 1 domain. Residues Cys33 and Cys98 are joined by a disulfide bond. Disordered regions lie at residues 425–473 (ETAK…LQTM), 500–575 (SLAR…GAPG), 727–775 (EDNE…NVGS), 845–864 (QTQG…DGKS), 881–907 (EASE…TLPY), 1011–1065 (SCEA…PEGQ), 1316–1340 (DPVE…EMEM), 1471–1509 (GPGE…ETEV), 1565–1587 (CGNH…PKGN), 1629–1696 (ECES…GSGH), and 1720–1754 (ENSR…PCKA). Basic and acidic residues predominate over residues 500–511 (SLARERTDEKYP). Residues 853–864 (RSTDKRSQDGKS) show a composition bias toward basic and acidic residues. Over residues 897 to 906 (PPSTFSSTLP) the composition is skewed to polar residues. A compositionally biased stretch (polar residues) spans 1574–1587 (DLTNTPCTSSPKGN). Composition is skewed to basic and acidic residues over residues 1631 to 1645 (ESEK…RDPC) and 1732 to 1754 (PKFE…PCKA). Residues 1759 to 1847 (PVLLKRIQAE…GKVTAEFNLT (89 aa)) enclose the Ig-like 2 domain. Cys1781 and Cys1831 form a disulfide bridge. The 233-residue stretch at 1874–2106 (KEDVFNDSYF…YCKMLGLKSL (233 aa)) folds into the Alpha-type protein kinase domain. Residues 2109-2144 (NSQKPKKPIVGKGRVPTNATQVKTPESETPPAERKT) are disordered.

Belongs to the protein kinase superfamily. Alpha-type protein kinase family. ALPK subfamily.

Its subcellular location is the basolateral cell membrane. The catalysed reaction is L-seryl-[protein] + ATP = O-phospho-L-seryl-[protein] + ADP + H(+). The enzyme catalyses L-threonyl-[protein] + ATP = O-phospho-L-threonyl-[protein] + ADP + H(+). Functionally, protein kinase that recognizes phosphorylation sites in which the surrounding peptides have an alpha-helical conformation. Regulates cardiac development and cardiomyocyte differentiation by negatively regulating Wnt/beta-catenin signaling. This chain is Alpha-protein kinase 2, found in Mus musculus (Mouse).